The primary structure comprises 319 residues: 4-diphosphocytidyl-2-C-methyl-D-erythritol kinase (319 aa).

Lysine 18 is an active-site residue. An ATP-binding site is contributed by 103–113; it reads PIGAGLAGGST. Aspartate 145 is an active-site residue.

This sequence belongs to the GHMP kinase family. IspE subfamily.

It carries out the reaction 4-CDP-2-C-methyl-D-erythritol + ATP = 4-CDP-2-C-methyl-D-erythritol 2-phosphate + ADP + H(+). It participates in isoprenoid biosynthesis; isopentenyl diphosphate biosynthesis via DXP pathway; isopentenyl diphosphate from 1-deoxy-D-xylulose 5-phosphate: step 3/6. Catalyzes the phosphorylation of the position 2 hydroxy group of 4-diphosphocytidyl-2C-methyl-D-erythritol. This chain is 4-diphosphocytidyl-2-C-methyl-D-erythritol kinase, found in Prochlorococcus marinus (strain NATL1A).